Consider the following 289-residue polypeptide: Ribosomal RNA small subunit methyltransferase A (289 aa).

6 residues coordinate S-adenosyl-L-methionine: Asn33, Val35, Gly60, Glu81, Asp111, and Asn130.

This sequence belongs to the class I-like SAM-binding methyltransferase superfamily. rRNA adenine N(6)-methyltransferase family. RsmA subfamily.

It localises to the cytoplasm. The catalysed reaction is adenosine(1518)/adenosine(1519) in 16S rRNA + 4 S-adenosyl-L-methionine = N(6)-dimethyladenosine(1518)/N(6)-dimethyladenosine(1519) in 16S rRNA + 4 S-adenosyl-L-homocysteine + 4 H(+). In terms of biological role, specifically dimethylates two adjacent adenosines (A1518 and A1519) in the loop of a conserved hairpin near the 3'-end of 16S rRNA in the 30S particle. May play a critical role in biogenesis of 30S subunits. This Corynebacterium efficiens (strain DSM 44549 / YS-314 / AJ 12310 / JCM 11189 / NBRC 100395) protein is Ribosomal RNA small subunit methyltransferase A.